Reading from the N-terminus, the 234-residue chain is uncharacterized protein (234 aa).

Positions 65–89 are disordered; it reads QNANRQEGRRRGLRPSSDGNLRREN. The RING-type zinc finger occupies 185–220; that stretch reads CAVCLHNKVCVLFQKCKHVITCGPCSLRIKECPVCK.

Belongs to the IIV-6 175R/332L family.

This is an uncharacterized protein from Acheta domesticus (House cricket).